We begin with the raw amino-acid sequence, 702 residues long: Heparin-sulfate lyase (702 aa).

Residues 1-17 form the signal peptide; the sequence is MKNIFFICFCALFAFSG. Tyr314 acts as the Proton acceptor in catalysis.

This sequence belongs to the polysaccharide lyase 12 family.

It is found in the periplasm. It carries out the reaction Elimination of sulfate, appears to act on linkages between N-acetyl-D-glucosamine and uronate. Product is an unsaturated sugar.. Specifically cleaves heparan sulfate-rich regions of acidic polysaccharides. Does not act on N,O-desulfated glucosamine or N-acetyl-O-sulfated glucosamine linkages. Functions in cleaving metazoan heparan sulfate and providing carbon, nitrogen and sulfate sources for microorganisms. This chain is Heparin-sulfate lyase (hepC), found in Bacteroides thetaiotaomicron (strain ATCC 29148 / DSM 2079 / JCM 5827 / CCUG 10774 / NCTC 10582 / VPI-5482 / E50).